The sequence spans 119 residues: Large ribosomal subunit protein uL18 (119 aa).

This sequence belongs to the universal ribosomal protein uL18 family. Part of the 50S ribosomal subunit; part of the 5S rRNA/L5/L18/L25 subcomplex. Contacts the 5S and 23S rRNAs.

Functionally, this is one of the proteins that bind and probably mediate the attachment of the 5S RNA into the large ribosomal subunit, where it forms part of the central protuberance. The sequence is that of Large ribosomal subunit protein uL18 from Cupriavidus metallidurans (strain ATCC 43123 / DSM 2839 / NBRC 102507 / CH34) (Ralstonia metallidurans).